The sequence spans 546 residues: MTTRYIFVTGGVVSSLGKGIAAASLAAILEARGLNVTIMKLDPYINVDPGTMSPTQHGEVFVTEDGAETDLDLGHYERFIRTKMNRRNNFTTGRIYEEVLRKERRGDYLGATIQVIPHITNAIKEKVIAGGEGHDVAIVEIGGTVGDIESLPFLESIRQLGVELGRDRTLFMHLTLVPFLGAAGEVKTKPTQHSVKELRSIGIAPDVLICRGDRAIPANERAKISLFCNVEERAVISLKDVDSIYKIPALLRSQGLDDLVVKRFGLECREADLSEWENVIYQEANPNGEVVIGMVGKYIELPDAYKSVNEALKHAGLKNRVSVTIKYIDSQTVEAKGDEVLQGLDGILVPGGFGERGVEGKIQAAKFARENNLPYFGICLGMQVALIEFARNVAGMADAHSTEFNKETPFPVVGLITEWVDEEGNVEQRHEASDLGGTMRLGAQLCHLLEGSKAAQAYKGNSCVERHRHRYEVNNKYRERLEQAGLVFSGLSSDRKLVEMIELKDHPWFVAGQFHPEFTSTPRDGHPLFEGFVAAASAHQKRDLKK.

The tract at residues 1–266 (MTTRYIFVTG…DDLVVKRFGL (266 aa)) is amidoligase domain. Serine 14 serves as a coordination point for CTP. A UTP-binding site is contributed by serine 14. Residues 15-20 (SLGKGI) and aspartate 72 each bind ATP. Mg(2+) is bound by residues aspartate 72 and glutamate 140. Residues 147-149 (DIE), 187-192 (KTKPTQ), and lysine 223 contribute to the CTP site. UTP is bound by residues 187 to 192 (KTKPTQ) and lysine 223. 239–241 (KDV) contacts ATP. Positions 291–542 (VIGMVGKYIE…VAAASAHQKR (252 aa)) constitute a Glutamine amidotransferase type-1 domain. Glycine 352 contacts L-glutamine. Residue cysteine 379 is the Nucleophile; for glutamine hydrolysis of the active site. L-glutamine-binding positions include 380 to 383 (LGMQ), glutamate 403, and arginine 470. Residues histidine 515 and glutamate 517 contribute to the active site.

The protein belongs to the CTP synthase family. Homotetramer.

The catalysed reaction is UTP + L-glutamine + ATP + H2O = CTP + L-glutamate + ADP + phosphate + 2 H(+). It catalyses the reaction L-glutamine + H2O = L-glutamate + NH4(+). The enzyme catalyses UTP + NH4(+) + ATP = CTP + ADP + phosphate + 2 H(+). It functions in the pathway pyrimidine metabolism; CTP biosynthesis via de novo pathway; CTP from UDP: step 2/2. Allosterically activated by GTP, when glutamine is the substrate; GTP has no effect on the reaction when ammonia is the substrate. The allosteric effector GTP functions by stabilizing the protein conformation that binds the tetrahedral intermediate(s) formed during glutamine hydrolysis. Inhibited by the product CTP, via allosteric rather than competitive inhibition. Its function is as follows. Catalyzes the ATP-dependent amination of UTP to CTP with either L-glutamine or ammonia as the source of nitrogen. Regulates intracellular CTP levels through interactions with the four ribonucleotide triphosphates. The sequence is that of CTP synthase from Shewanella sp. (strain MR-7).